The primary structure comprises 457 residues: 1-carboxybiuret hydrolase subunit AtzE (457 aa).

Residues K74 and S150 each act as charge relay system in the active site. S174 acts as the Acyl-ester intermediate in catalysis.

The protein belongs to the amidase family. In terms of assembly, heterotetramer consisting of 2 AtzE and 2 AtzG subunits.

The enzyme catalyses 1-carboxybiuret + H2O = urea-1,3-dicarboxylate + NH4(+). It participates in xenobiotic degradation; atrazine degradation. In terms of biological role, hydrolyzes 1-carboxybiuret to urea-1,3-dicarboxylate and NH(3). This is 1-carboxybiuret hydrolase subunit AtzE from Pseudomonas sp. (strain ADP).